Reading from the N-terminus, the 324-residue chain is Biotin synthase (324 aa).

In terms of domain architecture, Radical SAM core spans 50–278; it reads HAGPAFTCAI…QADILVAGGR (229 aa). The [4Fe-4S] cluster site is built by cysteine 67, cysteine 71, and cysteine 74. 2 residues coordinate [2Fe-2S] cluster: cysteine 143 and cysteine 203.

It belongs to the radical SAM superfamily. Biotin synthase family. In terms of assembly, homodimer. [4Fe-4S] cluster serves as cofactor. [2Fe-2S] cluster is required as a cofactor.

The catalysed reaction is (4R,5S)-dethiobiotin + (sulfur carrier)-SH + 2 reduced [2Fe-2S]-[ferredoxin] + 2 S-adenosyl-L-methionine = (sulfur carrier)-H + biotin + 2 5'-deoxyadenosine + 2 L-methionine + 2 oxidized [2Fe-2S]-[ferredoxin]. It participates in cofactor biosynthesis; biotin biosynthesis; biotin from 7,8-diaminononanoate: step 2/2. Functionally, catalyzes the conversion of dethiobiotin (DTB) to biotin by the insertion of a sulfur atom into dethiobiotin via a radical-based mechanism. This Oleidesulfovibrio alaskensis (strain ATCC BAA-1058 / DSM 17464 / G20) (Desulfovibrio alaskensis) protein is Biotin synthase.